The following is a 360-amino-acid chain: Phospho-N-acetylmuramoyl-pentapeptide-transferase (360 aa).

10 helical membrane passes run Tyr-21–Gly-41, Gly-70–Trp-90, Tyr-97–Tyr-117, Tyr-134–Ser-154, Val-168–Ser-188, Gly-199–Ser-219, Ala-236–Phe-256, Val-263–Leu-283, Ile-288–Val-308, and Val-338–Lys-358.

Belongs to the glycosyltransferase 4 family. MraY subfamily. The cofactor is Mg(2+).

It is found in the cell inner membrane. It carries out the reaction UDP-N-acetyl-alpha-D-muramoyl-L-alanyl-gamma-D-glutamyl-meso-2,6-diaminopimeloyl-D-alanyl-D-alanine + di-trans,octa-cis-undecaprenyl phosphate = di-trans,octa-cis-undecaprenyl diphospho-N-acetyl-alpha-D-muramoyl-L-alanyl-D-glutamyl-meso-2,6-diaminopimeloyl-D-alanyl-D-alanine + UMP. The protein operates within cell wall biogenesis; peptidoglycan biosynthesis. In terms of biological role, catalyzes the initial step of the lipid cycle reactions in the biosynthesis of the cell wall peptidoglycan: transfers peptidoglycan precursor phospho-MurNAc-pentapeptide from UDP-MurNAc-pentapeptide onto the lipid carrier undecaprenyl phosphate, yielding undecaprenyl-pyrophosphoryl-MurNAc-pentapeptide, known as lipid I. The chain is Phospho-N-acetylmuramoyl-pentapeptide-transferase from Methylococcus capsulatus (strain ATCC 33009 / NCIMB 11132 / Bath).